Here is a 484-residue protein sequence, read N- to C-terminus: Glycogen synthase 2 (484 aa).

Residue lysine 15 participates in ADP-alpha-D-glucose binding.

The protein belongs to the glycosyltransferase 1 family. Bacterial/plant glycogen synthase subfamily.

It carries out the reaction [(1-&gt;4)-alpha-D-glucosyl](n) + ADP-alpha-D-glucose = [(1-&gt;4)-alpha-D-glucosyl](n+1) + ADP + H(+). Its pathway is glycan biosynthesis; glycogen biosynthesis. Its function is as follows. Synthesizes alpha-1,4-glucan chains using ADP-glucose. The chain is Glycogen synthase 2 from Geobacter metallireducens (strain ATCC 53774 / DSM 7210 / GS-15).